The chain runs to 271 residues: Putative phosphoenolpyruvate synthase regulatory protein (271 aa).

152–159 (GVSRCGKT) is a binding site for ADP.

Belongs to the pyruvate, phosphate/water dikinase regulatory protein family. PSRP subfamily.

The enzyme catalyses [pyruvate, water dikinase] + ADP = [pyruvate, water dikinase]-phosphate + AMP + H(+). The catalysed reaction is [pyruvate, water dikinase]-phosphate + phosphate + H(+) = [pyruvate, water dikinase] + diphosphate. Functionally, bifunctional serine/threonine kinase and phosphorylase involved in the regulation of the phosphoenolpyruvate synthase (PEPS) by catalyzing its phosphorylation/dephosphorylation. The sequence is that of Putative phosphoenolpyruvate synthase regulatory protein from Legionella pneumophila (strain Corby).